We begin with the raw amino-acid sequence, 280 residues long: ATP synthase subunit a (280 aa).

Transmembrane regions (helical) follow at residues 45-65 (AINVDSMLFSIGLGVLFLFLF), 105-125 (LVAPLALTVFMWVFLMNLMDL), 126-146 (LPVDWLPYVATMAGIPYLKVV), 159-179 (LSIFFLVLYYSVKMKGAGGFF), 190-210 (FLFPVNLLLEGVGLIAKPISL), 223-243 (MIFILIALMFGGGWVLALFGG), and 250-270 (AVFHILIITLQAFIFMTLTIV).

It belongs to the ATPase A chain family. As to quaternary structure, F-type ATPases have 2 components, CF(1) - the catalytic core - and CF(0) - the membrane proton channel. CF(1) has five subunits: alpha(3), beta(3), gamma(1), delta(1), epsilon(1). CF(0) has three main subunits: a(1), b(2) and c(9-12). The alpha and beta chains form an alternating ring which encloses part of the gamma chain. CF(1) is attached to CF(0) by a central stalk formed by the gamma and epsilon chains, while a peripheral stalk is formed by the delta and b chains.

It is found in the cell inner membrane. Its function is as follows. Key component of the proton channel; it plays a direct role in the translocation of protons across the membrane. This chain is ATP synthase subunit a, found in Thiobacillus denitrificans (strain ATCC 25259 / T1).